The chain runs to 261 residues: uncharacterized protein (261 aa).

It localises to the plastid. The protein resides in the chloroplast. This is an uncharacterized protein from Mesostigma viride (Green alga).